A 726-amino-acid polypeptide reads, in one-letter code: WD repeat and coiled-coil-containing protein (726 aa).

WD repeat units lie at residues 55–98 and 154–194; these read GQFE…LDKN and KSSG…LNAC. The segment at 503–571 is disordered; that stretch reads SYDGDQSPTS…SSPPNFIKHG (69 aa). Residues 506–515 are compositionally biased toward polar residues; it reads GDQSPTSSAN. Positions 517 to 535 are enriched in basic and acidic residues; the sequence is FDDKRSKLRVESLDTEPKN. A compositionally biased stretch (polar residues) spans 550 to 565; sequence SRPTSPKSECQKSSPP. Positions 581 to 609 form a coiled coil; it reads SISRNVERLCCNFAHLQQHLSELTDITRN.

This chain is WD repeat and coiled-coil-containing protein (wdcp), found in Xenopus tropicalis (Western clawed frog).